The chain runs to 156 residues: ATP synthase subunit b (156 aa).

The chain crosses the membrane as a helical span at residues 12–32 (VAFLIFVLFCMKYVWPPVITA).

The protein belongs to the ATPase B chain family. As to quaternary structure, F-type ATPases have 2 components, F(1) - the catalytic core - and F(0) - the membrane proton channel. F(1) has five subunits: alpha(3), beta(3), gamma(1), delta(1), epsilon(1). F(0) has three main subunits: a(1), b(2) and c(10-14). The alpha and beta chains form an alternating ring which encloses part of the gamma chain. F(1) is attached to F(0) by a central stalk formed by the gamma and epsilon chains, while a peripheral stalk is formed by the delta and b chains.

The protein resides in the cell inner membrane. Functionally, f(1)F(0) ATP synthase produces ATP from ADP in the presence of a proton or sodium gradient. F-type ATPases consist of two structural domains, F(1) containing the extramembraneous catalytic core and F(0) containing the membrane proton channel, linked together by a central stalk and a peripheral stalk. During catalysis, ATP synthesis in the catalytic domain of F(1) is coupled via a rotary mechanism of the central stalk subunits to proton translocation. In terms of biological role, component of the F(0) channel, it forms part of the peripheral stalk, linking F(1) to F(0). The sequence is that of ATP synthase subunit b from Pseudomonas putida (strain ATCC 47054 / DSM 6125 / CFBP 8728 / NCIMB 11950 / KT2440).